The primary structure comprises 226 residues: Calcium-binding protein 1 (226 aa).

G2 is lipidated: N-myristoyl glycine. The S-palmitoyl cysteine moiety is linked to residue C4. 4 EF-hand domains span residues 81–116 (EEIE…MGYM), 135–152 (GHVD…KLLA), 158–193 (IGVK…LLGH), and 195–226 (VGHR…MMSR). Ca(2+)-binding residues include D94, D96, D98, Y100, and D105. Residues D171, N173, D175, and E177 each coordinate Ca(2+). S179 bears the Phosphoserine mark. Residues E182, D208, N210, D212, R214, and E219 each contribute to the Ca(2+) site.

As to quaternary structure, homodimer. Interacts (via C-terminus) with ITPR1, ITPR2 and ITPR3. This binding is calcium dependent and the interaction correlates with calcium concentration. An additional calcium-independent interaction with the N-terminus of ITPR1 results in a decreased InsP(3) binding to the receptor. Interacts with CACNA1A (via C-terminal CDB motif) in the pre- and postsynaptic membranes. Interacts with CACNA1C (via C-terminal C and IQ motifs). Interacts with CACNA1D. The binding to the C motif is calcium independent whereas the binding to IQ requires the presence of calcium and is mutually exclusive with calmodulin binding. Interacts with TRPC5 (via C-terminus). Interacts (via EF-hands 1 and 2) at microtubules with MAP1LC3B. Interacts with MYO1C. Interacts (via EF-hands 1 and 2) with NSMF (via the central NLS-containing motif region), the interaction occurs in a calcium dependent manner after synaptic NMDA receptor stimulation and prevents nuclear import of NSMF. Interacts with SPACA9. Post-translationally, phosphorylated. The phosphorylation regulates the activity.

It is found in the cytoplasm. The protein localises to the cytoskeleton. The protein resides in the perinuclear region. Its subcellular location is the cell membrane. It localises to the golgi apparatus. It is found in the postsynaptic density. Modulates calcium-dependent activity of inositol 1,4,5-triphosphate receptors (ITPRs). Inhibits agonist-induced intracellular calcium signaling. Enhances inactivation and does not support calcium-dependent facilitation of voltage-dependent P/Q-type calcium channels. Causes calcium-dependent facilitation and inhibits inactivation of L-type calcium channels by binding to the same sites as calmodulin in the C-terminal domain of CACNA1C, but has an opposite effect on channel function. Suppresses the calcium-dependent inactivation of CACNA1D. Inhibits TRPC5 channels. Prevents NMDA receptor-induced cellular degeneration. Required for the normal transfer of light signals through the retina. This chain is Calcium-binding protein 1 (CABP1), found in Bos taurus (Bovine).